The sequence spans 412 residues: Palmitoyltransferase ZDHHC11 (412 aa).

Topologically, residues 1-42 (MDTRSGSQCSVTPEAILNNEKLVLPPRISRVNGWSLPLHYFQ) are cytoplasmic. Residues 43-63 (VVTWAVFVGLSSATFGIFIPF) form a helical membrane-spanning segment. The Lumenal portion of the chain corresponds to 64–69 (LPHAWK). Residues 70-90 (YIAYVVTGGIFSFHLVVHLIA) traverse the membrane as a helical segment. Over 91–176 (SCIDPADSNV…YWFFFSTVAS (86 aa)) the chain is Cytoplasmic. One can recognise a DHHC domain in the interval 125 to 175 (QFCHLCKVTVNKKTKHCISCNKCVSGFDHHCKWINNCVGSRNYWFFFSTVA). The active-site S-palmitoyl cysteine intermediate is C155. A helical membrane pass occupies residues 177 to 197 (ATAGMLCLIAILLYVLVQYLV). The Lumenal segment spans residues 198-230 (NPGVLRTDPRYEDVKNMNTWLLFLPLFPVQVQT). The segment at 198–412 (NPGVLRTDPR…MKTDSAESED (215 aa)) is mediates interaction with IRF3 and STING1. The chain crosses the membrane as a helical span at residues 231 to 251 (LIVVIIGMLVLLLDFLGLVHL). Residues 252–412 (GQLLIFHIYL…MKTDSAESED (161 aa)) are Cytoplasmic-facing. A disordered region spans residues 374–412 (HPDGGSMAQEADDAPSISTLGLQQETTEPMKTDSAESED). The segment covering 389–400 (SISTLGLQQETT) has biased composition (polar residues). Basic and acidic residues predominate over residues 401 to 412 (EPMKTDSAESED).

Belongs to the DHHC palmitoyltransferase family. Interacts with IRF3 and STING1; in presence of DNA viruses recruits IRF3 to STING1 promoting IRF3 phosphorylation and activation. As to expression, expressed in testis.

It is found in the endoplasmic reticulum membrane. It carries out the reaction L-cysteinyl-[protein] + hexadecanoyl-CoA = S-hexadecanoyl-L-cysteinyl-[protein] + CoA. Functionally, endoplasmic reticulum-localized palmitoyltransferase that could catalyze the addition of palmitate onto various protein substrates and be involved in a variety of cellular processes. Has a palmitoyltransferase activity toward NCDN and regulates NCDN association with endosome membranes through this palmitoylation. May play a role in cell proliferation. In terms of biological role, also has a palmitoyltransferase activity-independent function in DNA virus-triggered and CGAS-mediated innate immune response. Functions as an adapter that recruits IRF3 to STING1 to promote the activation of that key transcriptional regulator of type I interferon (IFN)-dependent immune response. This is Palmitoyltransferase ZDHHC11 from Homo sapiens (Human).